We begin with the raw amino-acid sequence, 118 residues long: Mediator of RNA polymerase II transcription subunit 11 (118 aa).

Belongs to the Mediator complex subunit 11 family. In terms of assembly, component of the Mediator complex.

The protein resides in the nucleus. Functionally, component of the Mediator complex, a coactivator involved in the regulated transcription of nearly all RNA polymerase II-dependent genes. Mediator functions as a bridge to convey information from gene-specific regulatory proteins to the basal RNA polymerase II transcription machinery. Mediator is recruited to promoters by direct interactions with regulatory proteins and serves as a scaffold for the assembly of a functional pre-initiation complex with RNA polymerase II and the general transcription factors. The chain is Mediator of RNA polymerase II transcription subunit 11 (med11) from Xenopus tropicalis (Western clawed frog).